We begin with the raw amino-acid sequence, 316 residues long: MIKLGIVMDPIANINIKKDSSFAMLLEAQRRGYELHYMEMADLYLINGEARARTRTLSVEQNYDKWYEFTGEQDLPLADLDVILMRKDPPFDTEFIYSTYILERAEDKGTLIVNKPQSLRDCNEKLFTAWFSDLTPETLVTRNKAQLKAFWEKHSDIILKPLDGMGGASIFRVKEGDPNLGVIAETLTEHGTRYCMAQNYLPAIKDGDKRVLVVDGEPVPYCLARIPQGGETRGNLAAGGRGEPRPLTESDWKIARQIGPTLKEKGLIFVGLDIIGDRLTEINVTSPTCIREIEAEFPVSITGMLMDAIEARLQQQ.

The ATP-grasp domain occupies 125-310 (KLFTAWFSDL…ITGMLMDAIE (186 aa)). ATP is bound at residue 151–207 (WEKHSDIILKPLDGMGGASIFRVKEGDPNLGVIAETLTEHGTRYCMAQNYLPAIKDG). Residues glutamate 281 and asparagine 283 each contribute to the Mg(2+) site.

The protein belongs to the prokaryotic GSH synthase family. Mg(2+) serves as cofactor. It depends on Mn(2+) as a cofactor.

It catalyses the reaction gamma-L-glutamyl-L-cysteine + glycine + ATP = glutathione + ADP + phosphate + H(+). Its pathway is sulfur metabolism; glutathione biosynthesis; glutathione from L-cysteine and L-glutamate: step 2/2. The polypeptide is Glutathione synthetase (Escherichia coli O6:H1 (strain CFT073 / ATCC 700928 / UPEC)).